A 302-amino-acid polypeptide reads, in one-letter code: Tyrosine--tRNA ligase 2 (302 aa).

Tyr33 contacts L-tyrosine. A 'HIGH' region motif is present at residues Pro38–His47. L-tyrosine contacts are provided by Tyr160 and Gln164. A 'KMSKS' region motif is present at residues Lys220–Ser224. Lys223 serves as a coordination point for ATP.

The protein belongs to the class-I aminoacyl-tRNA synthetase family. TyrS type 1 subfamily. As to quaternary structure, homodimer.

The protein localises to the cytoplasm. It carries out the reaction tRNA(Tyr) + L-tyrosine + ATP = L-tyrosyl-tRNA(Tyr) + AMP + diphosphate + H(+). Functionally, catalyzes the attachment of tyrosine to tRNA(Tyr) in a two-step reaction: tyrosine is first activated by ATP to form Tyr-AMP and then transferred to the acceptor end of tRNA(Tyr). This is Tyrosine--tRNA ligase 2 (tyrS2) from Streptococcus thermophilus (strain CNRZ 1066).